The sequence spans 473 residues: Ribulose bisphosphate carboxylase large chain (473 aa).

The interval 1-136 is necessary and sufficient to target proteins to carboxysomes, interacts with shell proteins; it reads MAVKKYSAGV…RLEDVRFPLA (136 aa). Residues Asn-116 and Thr-166 each coordinate substrate. Residue Lys-168 is the Proton acceptor of the active site. Position 170 (Lys-170) interacts with substrate. Mg(2+) contacts are provided by Lys-194, Asp-196, and Glu-197. Lys-194 bears the N6-carboxylysine mark. The active-site Proton acceptor is His-287. Positions 288, 320, and 372 each coordinate substrate.

Belongs to the RuBisCO large chain family. Type I subfamily. As to quaternary structure, heterohexadecamer of 8 large chains and 8 small chains. Forms a CsoS2-CsoS1-RuBisCO complex. The N-terminus (residues 1-136) interacts with shell proteins CsoS1A, CsoS1B and CsoS1C. Holo-RuBisCO interacts with the N-terminal repeats of CsoS2; binding is sensitive to ionic strength. A fusion of a single N-terminal repeat to the C-terminus of the large subunit of RuBisCO (cbbL) shows the repeat can lie between a CbbL dimer, making minor contacts to CbbS; thus each RuBisCO holoenzyme could bind 8 repeats. It depends on Mg(2+) as a cofactor.

Its subcellular location is the carboxysome. The catalysed reaction is 2 (2R)-3-phosphoglycerate + 2 H(+) = D-ribulose 1,5-bisphosphate + CO2 + H2O. It carries out the reaction D-ribulose 1,5-bisphosphate + O2 = 2-phosphoglycolate + (2R)-3-phosphoglycerate + 2 H(+). In terms of biological role, ruBisCO catalyzes two reactions: the carboxylation of D-ribulose 1,5-bisphosphate, the primary event in carbon dioxide fixation, as well as the oxidative fragmentation of the pentose substrate. Both reactions occur simultaneously and in competition at the same active site. There are estimated to be 270 RuBisCO heterohexadecamers per carboxysome. Its function is as follows. Alpha-carboxysomes are able to assemble in the absence of RuBisCO, unlike beta-carboxysomes. The RuBisCO large subunit is required for enzyme integration into carboxysomes; replacing it with the carboxysomally targeted gene (Tcr_0838, AC Q31HD9) of H.crungenus places RuBisCO in the carboxysome, while the non-carboxysomal large subunit of H.crungenus (Tcr_0427, AC Q31IK0) is not incorporated in the carboxysome. The protein is Ribulose bisphosphate carboxylase large chain of Halothiobacillus neapolitanus (strain ATCC 23641 / c2) (Thiobacillus neapolitanus).